We begin with the raw amino-acid sequence, 586 residues long: CTP synthase 2 (586 aa).

The Glutamine amidotransferase type-1 domain maps to 300-554 (SIALVGKYTK…LAATGNLNAH (255 aa)). Catalysis depends on for GATase activity residues cysteine 399, histidine 526, and glutamate 528. Phosphoserine is present on residues serine 568, serine 571, and serine 574.

Belongs to the CTP synthase family.

It carries out the reaction UTP + L-glutamine + ATP + H2O = CTP + L-glutamate + ADP + phosphate + 2 H(+). It functions in the pathway pyrimidine metabolism; CTP biosynthesis via de novo pathway; CTP from UDP: step 2/2. In terms of biological role, catalyzes the ATP-dependent amination of UTP to CTP with either L-glutamine or ammonia as the source of nitrogen. Constitutes the rate-limiting enzyme in the synthesis of cytosine nucleotides. The chain is CTP synthase 2 (Ctps2) from Mus musculus (Mouse).